Reading from the N-terminus, the 74-residue chain is Progonadoliberin-3 (74 aa).

The N-terminal stretch at 1–15 (VRVVVLALVAQVTLS) is a signal peptide. Gln-16 is modified (pyrrolidone carboxylic acid). Gly-25 carries the post-translational modification Glycine amide.

It belongs to the GnRH family.

It localises to the secreted. In terms of biological role, stimulates the secretion of gonadotropins. The polypeptide is Progonadoliberin-3 (gnrh3) (Oncorhynchus tshawytscha (Chinook salmon)).